Here is a 1250-residue protein sequence, read N- to C-terminus: DNA-directed RNA polymerase subunit beta (1250 aa).

The interval 1139 to 1226 (GGAELAKPAP…DLFDEGDEDL (88 aa)) is disordered. Acidic residues-rich tracts occupy residues 1155–1183 (ESGE…DPEE) and 1207–1226 (ADDD…DEDL).

It belongs to the RNA polymerase beta chain family. The RNAP catalytic core consists of 2 alpha, 1 beta, 1 beta' and 1 omega subunit. When a sigma factor is associated with the core the holoenzyme is formed, which can initiate transcription.

It catalyses the reaction RNA(n) + a ribonucleoside 5'-triphosphate = RNA(n+1) + diphosphate. In terms of biological role, DNA-dependent RNA polymerase catalyzes the transcription of DNA into RNA using the four ribonucleoside triphosphates as substrates. The protein is DNA-directed RNA polymerase subunit beta of Symbiobacterium thermophilum (strain DSM 24528 / JCM 14929 / IAM 14863 / T).